Consider the following 501-residue polypeptide: ATP synthase subunit alpha (501 aa).

An ATP-binding site is contributed by G169 to T176.

Belongs to the ATPase alpha/beta chains family. F-type ATPases have 2 components, CF(1) - the catalytic core - and CF(0) - the membrane proton channel. CF(1) has five subunits: alpha(3), beta(3), gamma(1), delta(1), epsilon(1). CF(0) has three main subunits: a(1), b(2) and c(9-12). The alpha and beta chains form an alternating ring which encloses part of the gamma chain. CF(1) is attached to CF(0) by a central stalk formed by the gamma and epsilon chains, while a peripheral stalk is formed by the delta and b chains.

The protein localises to the cell inner membrane. The enzyme catalyses ATP + H2O + 4 H(+)(in) = ADP + phosphate + 5 H(+)(out). In terms of biological role, produces ATP from ADP in the presence of a proton gradient across the membrane. The alpha chain is a regulatory subunit. This chain is ATP synthase subunit alpha, found in Campylobacter jejuni subsp. jejuni serotype O:6 (strain 81116 / NCTC 11828).